The primary structure comprises 268 residues: Tryptophan synthase alpha chain (268 aa).

Residues Glu49 and Asp60 each act as proton acceptor in the active site.

Belongs to the TrpA family. In terms of assembly, tetramer of two alpha and two beta chains.

The enzyme catalyses (1S,2R)-1-C-(indol-3-yl)glycerol 3-phosphate + L-serine = D-glyceraldehyde 3-phosphate + L-tryptophan + H2O. It functions in the pathway amino-acid biosynthesis; L-tryptophan biosynthesis; L-tryptophan from chorismate: step 5/5. In terms of biological role, the alpha subunit is responsible for the aldol cleavage of indoleglycerol phosphate to indole and glyceraldehyde 3-phosphate. The protein is Tryptophan synthase alpha chain of Edwardsiella ictaluri (strain 93-146).